Here is a 362-residue protein sequence, read N- to C-terminus: Phosphoserine aminotransferase (362 aa).

Arginine 43 provides a ligand contact to L-glutamate. Pyridoxal 5'-phosphate contacts are provided by residues 77–78, tryptophan 103, threonine 153, aspartate 173, and glutamine 196; that span reads AT. An N6-(pyridoxal phosphate)lysine modification is found at lysine 197. Residue 238–239 coordinates pyridoxal 5'-phosphate; sequence NT.

It belongs to the class-V pyridoxal-phosphate-dependent aminotransferase family. SerC subfamily. As to quaternary structure, homodimer. Requires pyridoxal 5'-phosphate as cofactor.

The protein resides in the cytoplasm. The enzyme catalyses O-phospho-L-serine + 2-oxoglutarate = 3-phosphooxypyruvate + L-glutamate. The catalysed reaction is 4-(phosphooxy)-L-threonine + 2-oxoglutarate = (R)-3-hydroxy-2-oxo-4-phosphooxybutanoate + L-glutamate. The protein operates within amino-acid biosynthesis; L-serine biosynthesis; L-serine from 3-phospho-D-glycerate: step 2/3. Its pathway is cofactor biosynthesis; pyridoxine 5'-phosphate biosynthesis; pyridoxine 5'-phosphate from D-erythrose 4-phosphate: step 3/5. Functionally, catalyzes the reversible conversion of 3-phosphohydroxypyruvate to phosphoserine and of 3-hydroxy-2-oxo-4-phosphonooxybutanoate to phosphohydroxythreonine. The chain is Phosphoserine aminotransferase from Acidithiobacillus ferrooxidans (strain ATCC 23270 / DSM 14882 / CIP 104768 / NCIMB 8455) (Ferrobacillus ferrooxidans (strain ATCC 23270)).